We begin with the raw amino-acid sequence, 212 residues long: Imidazole glycerol phosphate synthase subunit HisH (212 aa).

In terms of domain architecture, Glutamine amidotransferase type-1 spans 2 to 212 (QTAIIDYGMG…LTMLKNFLNW (211 aa)). Cys85 serves as the catalytic Nucleophile. Active-site residues include His194 and Glu196.

In terms of assembly, heterodimer of HisH and HisF.

Its subcellular location is the cytoplasm. It carries out the reaction 5-[(5-phospho-1-deoxy-D-ribulos-1-ylimino)methylamino]-1-(5-phospho-beta-D-ribosyl)imidazole-4-carboxamide + L-glutamine = D-erythro-1-(imidazol-4-yl)glycerol 3-phosphate + 5-amino-1-(5-phospho-beta-D-ribosyl)imidazole-4-carboxamide + L-glutamate + H(+). It catalyses the reaction L-glutamine + H2O = L-glutamate + NH4(+). It functions in the pathway amino-acid biosynthesis; L-histidine biosynthesis; L-histidine from 5-phospho-alpha-D-ribose 1-diphosphate: step 5/9. Its function is as follows. IGPS catalyzes the conversion of PRFAR and glutamine to IGP, AICAR and glutamate. The HisH subunit catalyzes the hydrolysis of glutamine to glutamate and ammonia as part of the synthesis of IGP and AICAR. The resulting ammonia molecule is channeled to the active site of HisF. This chain is Imidazole glycerol phosphate synthase subunit HisH, found in Neisseria gonorrhoeae (strain ATCC 700825 / FA 1090).